Consider the following 72-residue polypeptide: MSRLLQFCSSLLRHRVVLFSKPGHSGRLSHSESPQNQVLTPTESVVGIVVFFATFFIPAAYVMSNLKFFKGE.

Residues 1 to 29 (MSRLLQFCSSLLRHRVVLFSKPGHSGRLS) constitute a mitochondrion transit peptide. Topologically, residues 30-40 (HSESPQNQVLT) are mitochondrial matrix. Residues 41 to 64 (PTESVVGIVVFFATFFIPAAYVMS) form a helical membrane-spanning segment. Residues 65–72 (NLKFFKGE) lie on the Mitochondrial intermembrane side of the membrane.

It belongs to the cytochrome c oxidase VIII family. Component of the cytochrome c oxidase (complex IV, CIV), a multisubunit enzyme composed of 14 subunits. The complex is composed of a catalytic core of 3 subunits MT-CO1, MT-CO2 and MT-CO3, encoded in the mitochondrial DNA, and 11 supernumerary subunits COX4I, COX5A, COX5B, COX6A, COX6B, COX6C, COX7A, COX7B, COX7C, COX8 and NDUFA4, which are encoded in the nuclear genome. The complex exists as a monomer or a dimer and forms supercomplexes (SCs) in the inner mitochondrial membrane with NADH-ubiquinone oxidoreductase (complex I, CI) and ubiquinol-cytochrome c oxidoreductase (cytochrome b-c1 complex, complex III, CIII), resulting in different assemblies (supercomplex SCI(1)III(2)IV(1) and megacomplex MCI(2)III(2)IV(2)).

It is found in the mitochondrion inner membrane. It functions in the pathway energy metabolism; oxidative phosphorylation. Its function is as follows. Component of the cytochrome c oxidase, the last enzyme in the mitochondrial electron transport chain which drives oxidative phosphorylation. The respiratory chain contains 3 multisubunit complexes succinate dehydrogenase (complex II, CII), ubiquinol-cytochrome c oxidoreductase (cytochrome b-c1 complex, complex III, CIII) and cytochrome c oxidase (complex IV, CIV), that cooperate to transfer electrons derived from NADH and succinate to molecular oxygen, creating an electrochemical gradient over the inner membrane that drives transmembrane transport and the ATP synthase. Cytochrome c oxidase is the component of the respiratory chain that catalyzes the reduction of oxygen to water. Electrons originating from reduced cytochrome c in the intermembrane space (IMS) are transferred via the dinuclear copper A center (CU(A)) of subunit 2 and heme A of subunit 1 to the active site in subunit 1, a binuclear center (BNC) formed by heme A3 and copper B (CU(B)). The BNC reduces molecular oxygen to 2 water molecules using 4 electrons from cytochrome c in the IMS and 4 protons from the mitochondrial matrix. This chain is Cytochrome c oxidase subunit 8C, mitochondrial (Cox8c), found in Rattus norvegicus (Rat).